The primary structure comprises 944 residues: Protein translocase subunit SecA (944 aa).

ATP is bound by residues glutamine 96, 114 to 118 (GEGKT), and aspartate 554.

This sequence belongs to the SecA family. In terms of assembly, monomer and homodimer. Part of the essential Sec protein translocation apparatus which comprises SecA, SecYEG and auxiliary proteins SecDF. Other proteins may also be involved.

Its subcellular location is the cell inner membrane. It is found in the cytoplasm. The enzyme catalyses ATP + H2O + cellular proteinSide 1 = ADP + phosphate + cellular proteinSide 2.. Part of the Sec protein translocase complex. Interacts with the SecYEG preprotein conducting channel. Has a central role in coupling the hydrolysis of ATP to the transfer of proteins into and across the cell membrane, serving as an ATP-driven molecular motor driving the stepwise translocation of polypeptide chains across the membrane. In Hydrogenobaculum sp. (strain Y04AAS1), this protein is Protein translocase subunit SecA.